The chain runs to 338 residues: 26S proteasome regulatory subunit RPN8 (338 aa).

Residue serine 2 is modified to N-acetylserine. The 136-residue stretch at 8 to 143 (VTIAPLVLLS…TDAYVAIEQV (136 aa)) folds into the MPN domain. The segment covering 301-326 (IQEQRVKDKQSKVSDDSESESGDKEA) has biased composition (basic and acidic residues). The interval 301–338 (IQEQRVKDKQSKVSDDSESESGDKEATAPLIQRKNKKN) is disordered. A phosphoserine mark is found at serine 314, serine 317, and serine 319. Threonine 327 is modified (phosphothreonine).

This sequence belongs to the peptidase M67A family. In terms of processing, N-acetylated by NAT1.

In terms of biological role, acts as a regulatory subunit of the 26S proteasome which is involved in the ATP-dependent degradation of ubiquitinated proteins. The chain is 26S proteasome regulatory subunit RPN8 (RPN8) from Saccharomyces cerevisiae (strain ATCC 204508 / S288c) (Baker's yeast).